Consider the following 1483-residue polypeptide: MDVLELLRASANGCYNTLFSDAWFQYVSKQIATTMYWYGALLVIGVLFIAWFLYFKRLARLRLRDEIARSLSAVTSSGGDHRGLRFRKRDKMLFYGRRMLRKMKNVSGQMYSSGKGYKRRAVMRFARRILQLQRENRPLEMKTVEPPAEYLEETIEGSDRVPPDALYMLQSIRIFGHFEKPIFLKLCKHTQLLQLMAGDYLFKITDPDDSVYIVQSGMINVYICNADGSTLSLKTVRKGESVTSLLSFIDVLSGNSSYYKTVTAKAMEKSVVIRLPMQAFEEVFEENPDVMIRVIQVIMIRLQRVLFTALRNYLGLNAELVQNHMRTKGSSVVPNAVGGAVLAQASQASRPVVRAPTSPNSRLSREEHTLSDPDPNPNANALLFAEVHGDAPYIDLYHHQQQQSSAVSVNQAGTRRSSTTYGPSGESPNGNANTAPGTSIDQRLVQSSAVDSLRRELGLSEDDAQIIEPFVEVRELEPNVTLITEGNAEDVCVWFVMTGTLAVYQSNADATRATKQDSKNDVLIHFVHPGEIVGGLAMLTGEASAYTIRARSNSRVAYIRRAAIYQIMRQRPRIVLDLGNGVVRRLSPLVRQCDYALDWIFLESGRAVYRQDESSDSTYIVLSGRMRSVITHPGGKKEIIGEYGKGDLVGIVEMITETSRTTTVMAVRDSELAKLPEGLFNAIKLRYPIVVTRLISFLSHRFLGSMQTRGSNAAGGPVEANPVTHKYSTVALVPITDDVPLTPFTYELYHSLCAIGPVLRLTSEVVRKQLGINIFEAANEYRLTSWLAQQEDRNIITLYQCDSSLSPWTQRCMRQADVVLIVGLGERSHLVGKFEREIDKLAMRTQKELVLLYPETTNAKPANTLSWLNARPWVTKHHHVLCVKRIFTRKSQYRINDLYSRVLLSEPNMHSDFSRLARWLTGNSIGLVLGGGGARGAAHIGMLKAIQEAGIPIDMVGGVSIGALMGALWCSERNITTVTQKAREWSKKMTKWFLQLLDLTYPITSMFSGREFNKTIHDTFGDVSIEDLWIPYFTLTTDITASCHRIHTNGSLWRYVRSSMSLSGYMPPLCDPQDGHLLLDGGYVNNLPGHLWRYCRASMSIAGVFPPFCDYRDGHLLLDGCYTNNVPADVMHNLGAAHIIAIDVGSQDDTDLTNYGDDLSGWWLLYKKWNPFTSPVKVPDLPDIQSRLAYVSCVRQLEEVKNSDYCEYIRPPIDKYKTLAFGSFDEIRDVGYVFGKNYFDNMAKAGRLGRFNQWFNKEPPKRGNHASLNEYTFIDLAQIVCKLPETYALNTADIFSEDEDFDGYISEPTTLNMDRRRIQVPRAGNSLSFSETEMDSDVEIDLELERKVDKATQSTPPTPNKQHALSPTSSQTNLLPLPPNSKPKEKQPSYDKLDREHKRRQKSKQKQQQERSSMQQRDSMVTLHPATMAEATTQTAPHSSEEDELNKPEQQPEQKPVPETEEQQQKQQDQQQQENLTKTDTKN.

The Lumenal segment spans residues 1–34 (MDVLELLRASANGCYNTLFSDAWFQYVSKQIATT). A helical transmembrane segment spans residues 35-55 (MYWYGALLVIGVLFIAWFLYF). Topologically, residues 56 to 1483 (KRLARLRLRD…ENLTKTDTKN (1428 aa)) are cytoplasmic. 174-301 (IFGHFEKPIF…IRVIQVIMIR (128 aa)) provides a ligand contact to a nucleoside 3',5'-cyclic phosphate. Disordered regions lie at residues 348 to 380 (ASRP…PNAN) and 404 to 440 (SSAV…GTSI). The segment covering 413–440 (GTRRSSTTYGPSGESPNGNANTAPGTSI) has biased composition (polar residues). 2 positions are modified to phosphoserine: S418 and S424. Residues 456-585 (ELGL…VVRR) and 574-701 (IVLD…LSHR) each bind a nucleoside 3',5'-cyclic phosphate. Positions 927–1093 (LVLGGGGARG…VNNLPGHLWR (167 aa)) constitute a PNPLA domain. Residues 931 to 936 (GGGARG) carry the GXGXXG motif. Positions 958 to 962 (GVSIG) match the GXSXG motif. S960 functions as the Nucleophile in the catalytic mechanism. The active-site Proton acceptor is D1080. A DGA/G motif is present at residues 1080–1082 (DGG). Position 1174 is a phosphoserine (S1174). Residues 1349–1483 (DKATQSTPPT…ENLTKTDTKN (135 aa)) are disordered. Over residues 1351-1373 (ATQSTPPTPNKQHALSPTSSQTN) the composition is skewed to polar residues. Basic and acidic residues predominate over residues 1382–1396 (KPKEKQPSYDKLDRE). The segment covering 1410–1419 (ERSSMQQRDS) has biased composition (low complexity). The span at 1445-1458 (LNKPEQQPEQKPVP) shows a compositional bias: basic and acidic residues. A compositionally biased stretch (low complexity) spans 1465 to 1474 (QKQQDQQQQE).

It belongs to the NTE family. In terms of assembly, interacts with Pka-C3; interaction inhibits the catalytic function of Pka-C3 and the esterase activity of sws.

It is found in the endoplasmic reticulum membrane. It carries out the reaction a 1-acyl-sn-glycero-3-phosphocholine + H2O = sn-glycerol 3-phosphocholine + a fatty acid + H(+). In terms of biological role, phospholipase B that deacylates intracellular phosphatidylcholine (PtdCho), generating glycerophosphocholine (GroPtdCho). This deacylation occurs at both sn-2 and sn-1 positions of PtdCho. Its specific chemical modification by certain organophosphorus (OP) compounds leads to distal axonopathy. Plays a role in the signaling mechanism between neurons and glia that regulates glia wrapping during development of the adult brain. Essential for membrane lipid homeostasis and cell survival in both neurons and glia of the adult brain. The chain is Neuropathy target esterase sws from Drosophila virilis (Fruit fly).